The primary structure comprises 201 residues: Recombination protein RecR (201 aa).

The C4-type zinc finger occupies 60–75 (CATCGNFDTVQPCAVC). One can recognise a Toprim domain in the interval 83 to 178 (GIICVVEDVP…DVTRLAHGVP (96 aa)).

The protein belongs to the RecR family.

May play a role in DNA repair. It seems to be involved in an RecBC-independent recombinational process of DNA repair. It may act with RecF and RecO. The sequence is that of Recombination protein RecR from Hyphomonas neptunium (strain ATCC 15444).